The following is a 122-amino-acid chain: U1 small nuclear ribonucleoprotein C (122 aa).

The Matrin-type zinc finger occupies 4–36; the sequence is YFCDYCDTYLTHDSPSVRKTHCSGRKHKDNVKM.

Belongs to the U1 small nuclear ribonucleoprotein C family. In terms of assembly, U1 snRNP is composed of the 7 core Sm proteins B/B', D1, D2, D3, E, F and G that assemble in a heptameric protein ring on the Sm site of the small nuclear RNA to form the core snRNP, and at least 3 U1 snRNP-specific proteins U1-70K, U1-A and U1-C. U1-C interacts with U1 snRNA and the 5' splice-site region of the pre-mRNA.

The protein localises to the nucleus. Functionally, component of the spliceosomal U1 snRNP, which is essential for recognition of the pre-mRNA 5' splice-site and the subsequent assembly of the spliceosome. U1-C is directly involved in initial 5' splice-site recognition for both constitutive and regulated alternative splicing. The interaction with the 5' splice-site seems to precede base-pairing between the pre-mRNA and the U1 snRNA. Stimulates commitment or early (E) complex formation by stabilizing the base pairing of the 5' end of the U1 snRNA and the 5' splice-site region. The sequence is that of U1 small nuclear ribonucleoprotein C from Ciona intestinalis (Transparent sea squirt).